We begin with the raw amino-acid sequence, 689 residues long: 1,4-alpha-glucan-branching enzyme (689 aa).

The (1,4-alpha-D-glucosyl)n site is built by W93 and K128. D345 (nucleophile) is an active-site residue. The Proton donor role is filled by E400.

The protein belongs to the glycosyl hydrolase 13 family. GlgB subfamily.

It is found in the cytoplasm. It carries out the reaction Transfers a segment of a (1-&gt;4)-alpha-D-glucan chain to a primary hydroxy group in a similar glucan chain.. The protein operates within glycan biosynthesis; glycogen biosynthesis. Its function is as follows. Glycogen-branching enzyme participates in the glycogen biosynthetic process along with glycogenin and glycogen synthase. Generates alpha-1,6-glucosidic branches from alpha-1,4-linked glucose chains, to increase solubility of the glycogen polymer. In Aspergillus oryzae (strain ATCC 42149 / RIB 40) (Yellow koji mold), this protein is 1,4-alpha-glucan-branching enzyme (gbeA).